The following is an 85-amino-acid chain: Small ribosomal subunit protein bS18 (85 aa).

This sequence belongs to the bacterial ribosomal protein bS18 family. As to quaternary structure, part of the 30S ribosomal subunit. Forms a tight heterodimer with protein bS6.

Binds as a heterodimer with protein bS6 to the central domain of the 16S rRNA, where it helps stabilize the platform of the 30S subunit. In Solidesulfovibrio magneticus (strain ATCC 700980 / DSM 13731 / RS-1) (Desulfovibrio magneticus), this protein is Small ribosomal subunit protein bS18.